The primary structure comprises 437 residues: UDP-N-acetylmuramoylalanine--D-glutamate ligase (437 aa).

An ATP-binding site is contributed by 112 to 118 (GSNGKST).

The protein belongs to the MurCDEF family.

Its subcellular location is the cytoplasm. It carries out the reaction UDP-N-acetyl-alpha-D-muramoyl-L-alanine + D-glutamate + ATP = UDP-N-acetyl-alpha-D-muramoyl-L-alanyl-D-glutamate + ADP + phosphate + H(+). Its pathway is cell wall biogenesis; peptidoglycan biosynthesis. In terms of biological role, cell wall formation. Catalyzes the addition of glutamate to the nucleotide precursor UDP-N-acetylmuramoyl-L-alanine (UMA). The sequence is that of UDP-N-acetylmuramoylalanine--D-glutamate ligase from Haemophilus influenzae (strain PittEE).